A 184-amino-acid polypeptide reads, in one-letter code: Ribosome-recycling factor (184 aa).

It belongs to the RRF family.

The protein resides in the cytoplasm. Functionally, responsible for the release of ribosomes from messenger RNA at the termination of protein biosynthesis. May increase the efficiency of translation by recycling ribosomes from one round of translation to another. In Psychrobacter arcticus (strain DSM 17307 / VKM B-2377 / 273-4), this protein is Ribosome-recycling factor.